Consider the following 200-residue polypeptide: Riboflavin synthase (200 aa).

2 Lumazine-binding repeats span residues 1 to 97 (MFSG…IGGH) and 98 to 190 (LLSG…VDTV). 2,4-dihydroxypteridine is bound by residues 4–6 (GII), 48–50 (CLT), 62–67 (DVIPET), 101–103 (GHV), lysine 132, 141–143 (SLT), and 155–160 (GLIPET).

As to quaternary structure, homotrimer.

The catalysed reaction is 2 6,7-dimethyl-8-(1-D-ribityl)lumazine + H(+) = 5-amino-6-(D-ribitylamino)uracil + riboflavin. It functions in the pathway cofactor biosynthesis; riboflavin biosynthesis; riboflavin from 2-hydroxy-3-oxobutyl phosphate and 5-amino-6-(D-ribitylamino)uracil: step 2/2. Functionally, catalyzes the dismutation of two molecules of 6,7-dimethyl-8-ribityllumazine, resulting in the formation of riboflavin and 5-amino-6-(D-ribitylamino)uracil. In Chlamydia pneumoniae (Chlamydophila pneumoniae), this protein is Riboflavin synthase (ribE).